The chain runs to 471 residues: tRNA modification GTPase MnmE (471 aa).

The (6S)-5-formyl-5,6,7,8-tetrahydrofolate site is built by arginine 26, glutamate 83, and lysine 136. A TrmE-type G domain is found at 232–393 (GLRVVLAGQP…LRRRLLQLAG (162 aa)). Asparagine 242 contributes to the K(+) binding site. GTP contacts are provided by residues 242–247 (NVGKSS), 261–267 (TPIAGTT), 286–289 (DTAG), 354–357 (NKAD), and 374–376 (SAR). Position 246 (serine 246) interacts with Mg(2+). Positions 261, 263, and 266 each coordinate K(+). Threonine 267 contributes to the Mg(2+) binding site. A (6S)-5-formyl-5,6,7,8-tetrahydrofolate-binding site is contributed by lysine 471.

The protein belongs to the TRAFAC class TrmE-Era-EngA-EngB-Septin-like GTPase superfamily. TrmE GTPase family. Homodimer. Heterotetramer of two MnmE and two MnmG subunits. It depends on K(+) as a cofactor.

Its subcellular location is the cytoplasm. Exhibits a very high intrinsic GTPase hydrolysis rate. Involved in the addition of a carboxymethylaminomethyl (cmnm) group at the wobble position (U34) of certain tRNAs, forming tRNA-cmnm(5)s(2)U34. This Methylibium petroleiphilum (strain ATCC BAA-1232 / LMG 22953 / PM1) protein is tRNA modification GTPase MnmE.